A 342-amino-acid polypeptide reads, in one-letter code: tRNA N6-adenosine threonylcarbamoyltransferase (342 aa).

2 residues coordinate Fe cation: His111 and His115. Substrate-binding positions include 134–138, Asp167, Gly180, and Asn276; that span reads LVSGG. A Fe cation-binding site is contributed by Asp304.

Belongs to the KAE1 / TsaD family. The cofactor is Fe(2+).

The protein resides in the cytoplasm. The enzyme catalyses L-threonylcarbamoyladenylate + adenosine(37) in tRNA = N(6)-L-threonylcarbamoyladenosine(37) in tRNA + AMP + H(+). Functionally, required for the formation of a threonylcarbamoyl group on adenosine at position 37 (t(6)A37) in tRNAs that read codons beginning with adenine. Is involved in the transfer of the threonylcarbamoyl moiety of threonylcarbamoyl-AMP (TC-AMP) to the N6 group of A37, together with TsaE and TsaB. TsaD likely plays a direct catalytic role in this reaction. The chain is tRNA N6-adenosine threonylcarbamoyltransferase from Helicobacter acinonychis (strain Sheeba).